Here is a 371-residue protein sequence, read N- to C-terminus: tRNA-specific 2-thiouridylase MnmA (371 aa).

Residues 16–23 and M42 each bind ATP; that span reads GMSGGVDS. The interval 102-104 is interaction with target base in tRNA; sequence NPD. Residue C107 is the Nucleophile of the active site. A disulfide bond links C107 and C204. Residue G132 participates in ATP binding. Positions 154 to 156 are interaction with tRNA; it reads KDQ. C204 functions as the Cysteine persulfide intermediate in the catalytic mechanism. An interaction with tRNA region spans residues 316-317; it reads RY.

Belongs to the MnmA/TRMU family.

The protein localises to the cytoplasm. The catalysed reaction is S-sulfanyl-L-cysteinyl-[protein] + uridine(34) in tRNA + AH2 + ATP = 2-thiouridine(34) in tRNA + L-cysteinyl-[protein] + A + AMP + diphosphate + H(+). Catalyzes the 2-thiolation of uridine at the wobble position (U34) of tRNA, leading to the formation of s(2)U34. In Shewanella piezotolerans (strain WP3 / JCM 13877), this protein is tRNA-specific 2-thiouridylase MnmA.